The sequence spans 279 residues: Protein phosphatase 1 regulatory subunit 3E (279 aa).

A phosphoserine mark is found at Ser-16 and Ser-33. A disordered region spans residues 28 to 86 (RSQRPSLEEEPEEEPGEGGTRFGARSRAHAPSRGRRARSAPAGGGGARAPRSRSPDTRK). Over residues 51–65 (ARSRAHAPSRGRRAR) the composition is skewed to basic residues. Position 66 is a phosphoserine (Ser-66). The short motif at 87–90 (RVRF) is the PP1-binding motif element. Positions 154–259 (AARLLTQRIC…NNGGRDYALR (106 aa)) constitute a CBM21 domain. Residues 176–198 (GSARVVDLAYEKRVSVRWSADGW) form a glycogen-binding motif region. A substrate-binding motif region spans residues 248–256 (WDNNGGRDY).

In terms of tissue distribution, expressed in skeletal muscle and heart with barely detectable levels in liver.

Acts as a glycogen-targeting subunit for PP1. PP1 is involved in glycogen metabolism and contributes to the activation of glycogen synthase leading to an increase in glycogen synthesis. This chain is Protein phosphatase 1 regulatory subunit 3E (PPP1R3E), found in Homo sapiens (Human).